The chain runs to 66 residues: Cell division protein FtsB (66 aa).

Residues 1 to 3 (MKM) lie on the Cytoplasmic side of the membrane. A helical membrane pass occupies residues 4 to 21 (LKIFLLFLLFWLQCSLWI). Over 22–66 (GKNGILDYIKIYKKIIVQKKKNEDFQIRNNQLILEIERLNNAIKN) the chain is Extracellular. Residues 38–66 (VQKKKNEDFQIRNNQLILEIERLNNAIKN) adopt a coiled-coil conformation.

Belongs to the FtsB family.

Its subcellular location is the cell membrane. In terms of biological role, essential cell division protein. May link together the upstream cell division proteins, which are predominantly cytoplasmic, with the downstream cell division proteins, which are predominantly extracellular. This is Cell division protein FtsB from Buchnera aphidicola subsp. Schizaphis graminum (strain Sg).